The following is a 280-amino-acid chain: Adenosylcobinamide-GDP ribazoletransferase (280 aa).

The next 7 membrane-spanning stretches (helical) occupy residues 4 to 24 (YLLA…GITM), 34 to 54 (IFFY…VAYA), 58 to 78 (VFPG…ITGF), 108 to 128 (TLGT…YGSI), 136 to 156 (IAAF…IAEV), 197 to 217 (LIGF…IGLI), and 254 to 274 (ITAL…YLGG).

The protein belongs to the CobS family. It depends on Mg(2+) as a cofactor.

The protein localises to the cell membrane. The catalysed reaction is alpha-ribazole + adenosylcob(III)inamide-GDP = adenosylcob(III)alamin + GMP + H(+). The enzyme catalyses alpha-ribazole 5'-phosphate + adenosylcob(III)inamide-GDP = adenosylcob(III)alamin 5'-phosphate + GMP + H(+). It functions in the pathway cofactor biosynthesis; adenosylcobalamin biosynthesis; adenosylcobalamin from cob(II)yrinate a,c-diamide: step 7/7. In terms of biological role, joins adenosylcobinamide-GDP and alpha-ribazole to generate adenosylcobalamin (Ado-cobalamin). Also synthesizes adenosylcobalamin 5'-phosphate from adenosylcobinamide-GDP and alpha-ribazole 5'-phosphate. The polypeptide is Adenosylcobinamide-GDP ribazoletransferase (Methanosarcina mazei (strain ATCC BAA-159 / DSM 3647 / Goe1 / Go1 / JCM 11833 / OCM 88) (Methanosarcina frisia)).